A 367-amino-acid chain; its full sequence is MASASRLPPLPALRDFIHMYRLRAKKILSQNYLMDMNITRKIAKHAKVIEKDWVIEIGPGPGGITRAILEAGASRLDVVEIDNRFIPPLQHLAEAADSRMFIHHQDALRTEIGDIWKNETARPESVDWHDSNLPAMHVIGNLPFNIASPLIIKYLRDMSYRRGVWQYGRVPLTLTFQLEVAKRLCSPIACDTRSRISIMSQYVAEPKMVFQISGSCFVPRPQVDVGVVRFVPRKTPLVNTSFEVLEKVCRQVFHYRQKYVTKGLKTLYPEELEDELSDDLLKKCRIDPTTTSIRLGIEQFADLAEGYNEQCIRYPGLFLYDYTNKLHNLEDLSKEPNALPPPVPIFAPAPTIDSADNTWSLKNFNCS.

Residues 1 to 16 constitute a mitochondrion transit peptide; that stretch reads MASASRLPPLPALRDF. S-adenosyl-L-methionine-binding positions include 30–33, asparagine 31, leucine 33, glycine 58, glutamate 80, aspartate 106, and asparagine 141; that span reads QNYL.

Belongs to the class I-like SAM-binding methyltransferase superfamily. rRNA adenine N(6)-methyltransferase family. KsgA subfamily.

It is found in the mitochondrion. Probable S-adenosyl-L-methionine-dependent methyltransferase which specifically dimethylates mitochondrial 12S rRNA at the conserved stem loop. Also required for basal transcription of mitochondrial DNA. Stimulates transcription independently of the methyltransferase activity. In Caenorhabditis elegans, this protein is Dimethyladenosine transferase 1, mitochondrial (tfbm-1).